The primary structure comprises 252 residues: Short chain dehydrogenase andC (252 aa).

An N-terminal signal peptide occupies residues 1–25 (MGFLQDKVVIITGAAAGIGLATATA). 3 residues coordinate NADP(+): isoleucine 11, aspartate 57, and arginine 119. Serine 137 acts as the Proton donor in catalysis. Residues tyrosine 151 and lysine 155 each contribute to the NADP(+) site. Catalysis depends on tyrosine 151, which acts as the Proton acceptor. Catalysis depends on lysine 155, which acts as the Lowers pKa of active site Tyr.

This sequence belongs to the short-chain dehydrogenases/reductases (SDR) family.

It functions in the pathway secondary metabolite biosynthesis; terpenoid biosynthesis. Its function is as follows. Short chain dehydrogenase; part of the gene cluster that mediates the biosynthesis of anditomin, a fungal meroterpenoid. The first step of the pathway is the synthesis of 3,5-dimethylorsellinic acid (DMOA) by the polyketide synthase andM. DMOA is then converted to the phthalide compound 5,7-dihydroxy-4,6-dimethylphthalide (DHDMP) by the cytochrome P450 monooxygenase andK, which is further prenylated by the prenyltransferase andD to yield farnesyl-DHDMP. Further epoxidation by the FAD-dependent monooxygenase andE leads to epoxyfarnesyl-DHDMP. The next step involves the terpene cyclase andB that converts epoxyfarnesyl-DHDMP into preandiloid A through opening of the epoxide ring followed by the cyclization of the farnesyl moiety. Preandiloid A is in turn oxidized at the C-3 hydroxyl group to yield preandiloid B by the dehydrogenase andC. The dioxygenase andA is solely responsible for the dehydrogenation of preandiloid B leading to the enone preandiloid C, as well as for the intriguing structural rearrangement to generate the bicyclo[2.2.2]octane core, transforming preandiloid C into andiconin. FAD-binding monooxygenase andJ then produces andilesin D which is reduced by dehydrogenase andI to yield andilesin A. Action of acetyltransferase andG followed by a spontaneous acetate elimination leads then to andilesin B, which is in turn substrate of the short chain dehydrogenase andH to yield andilesin C. Finally, the dioxygenase andF catalyzes the transformation of andilesin C to anditomin. This is Short chain dehydrogenase andC from Emericella variicolor (Aspergillus stellatus).